A 465-amino-acid polypeptide reads, in one-letter code: Ribulose bisphosphate carboxylase large chain (465 aa).

Position 4 is an N6,N6,N6-trimethyllysine (Lys4). Positions 113 and 163 each coordinate substrate. Lys165 acts as the Proton acceptor in catalysis. Residue Lys167 participates in substrate binding. The Mg(2+) site is built by Lys191, Asp193, and Glu194. N6-carboxylysine is present on Lys191. His284 serves as the catalytic Proton acceptor. Arg285, His317, and Ser369 together coordinate substrate.

It belongs to the RuBisCO large chain family. Type I subfamily. Heterohexadecamer of 8 large chains and 8 small chains; disulfide-linked. The disulfide link is formed within the large subunit homodimers. Requires Mg(2+) as cofactor. Post-translationally, the disulfide bond which can form in the large chain dimeric partners within the hexadecamer appears to be associated with oxidative stress and protein turnover.

The protein resides in the plastid. Its subcellular location is the chloroplast. The catalysed reaction is 2 (2R)-3-phosphoglycerate + 2 H(+) = D-ribulose 1,5-bisphosphate + CO2 + H2O. The enzyme catalyses D-ribulose 1,5-bisphosphate + O2 = 2-phosphoglycolate + (2R)-3-phosphoglycerate + 2 H(+). Functionally, ruBisCO catalyzes two reactions: the carboxylation of D-ribulose 1,5-bisphosphate, the primary event in carbon dioxide fixation, as well as the oxidative fragmentation of the pentose substrate in the photorespiration process. Both reactions occur simultaneously and in competition at the same active site. The chain is Ribulose bisphosphate carboxylase large chain from Bauera rubioides (Dog rose).